Here is a 363-residue protein sequence, read N- to C-terminus: Carbamoyl phosphate synthase small chain (363 aa).

CPSase regions lie at residues 1–168 and 1–172; these read MTKR…ASPG and MTKR…DGKR. Residues Ser46, Gly220, and Gly222 each contribute to the L-glutamine site. Residues 172–359 form the Glutamine amidotransferase type-1 domain; sequence RVVLVDYGVK…MEMMNVKEEG (188 aa). Cys247 (nucleophile) is an active-site residue. Residues Leu248, Gln251, Asn289, Gly291, and Tyr292 each coordinate L-glutamine. Residues His332 and Glu334 contribute to the active site.

Belongs to the CarA family. In terms of assembly, composed of two chains; the small (or glutamine) chain promotes the hydrolysis of glutamine to ammonia, which is used by the large (or ammonia) chain to synthesize carbamoyl phosphate. Tetramer of heterodimers (alpha,beta)4.

It carries out the reaction hydrogencarbonate + L-glutamine + 2 ATP + H2O = carbamoyl phosphate + L-glutamate + 2 ADP + phosphate + 2 H(+). The enzyme catalyses L-glutamine + H2O = L-glutamate + NH4(+). It participates in amino-acid biosynthesis; L-arginine biosynthesis; carbamoyl phosphate from bicarbonate: step 1/1. The protein operates within pyrimidine metabolism; UMP biosynthesis via de novo pathway; (S)-dihydroorotate from bicarbonate: step 1/3. In terms of biological role, small subunit of the glutamine-dependent carbamoyl phosphate synthetase (CPSase). CPSase catalyzes the formation of carbamoyl phosphate from the ammonia moiety of glutamine, carbonate, and phosphate donated by ATP, constituting the first step of 2 biosynthetic pathways, one leading to arginine and/or urea and the other to pyrimidine nucleotides. The small subunit (glutamine amidotransferase) binds and cleaves glutamine to supply the large subunit with the substrate ammonia. This is Carbamoyl phosphate synthase small chain from Listeria innocua serovar 6a (strain ATCC BAA-680 / CLIP 11262).